The following is a 271-amino-acid chain: Tetraspanin-11 (271 aa).

At 1–7 (MFRVSNF) the chain is on the cytoplasmic side. The helical transmembrane segment at 8 to 28 (MVGLANTLVMLVGASAIGYSI) threads the bilayer. At 29–44 (YMFVHQGVTDCESAIR) the chain is on the extracellular side. Residues 45 to 65 (IPLLTTGLILFLVSLLGVIGS) traverse the membrane as a helical segment. At 66–76 (CFKENLAMVSY) the chain is on the cytoplasmic side. The helical transmembrane segment at 77–97 (LIILFGGIVALMIFSIFLFFV) threads the bilayer. The Extracellular segment spans residues 98 to 236 (TNKGAGRVVS…LANIREKWRN (139 aa)). N-linked (GlcNAc...) asparagine glycosylation is found at Asn-185 and Asn-195. A helical transmembrane segment spans residues 237 to 257 (LLVFNICLLILLITVYSCGCC). The Cytoplasmic portion of the chain corresponds to 258 to 271 (ARRNNRTARKSDSV).

The protein belongs to the tetraspanin (TM4SF) family.

It localises to the membrane. May be involved in the regulation of cell differentiation. The sequence is that of Tetraspanin-11 (TET11) from Arabidopsis thaliana (Mouse-ear cress).